The sequence spans 240 residues: Small ribosomal subunit protein uS2 (240 aa).

Belongs to the universal ribosomal protein uS2 family.

The sequence is that of Small ribosomal subunit protein uS2 from Wigglesworthia glossinidia brevipalpis.